A 551-amino-acid polypeptide reads, in one-letter code: DEAD-box ATP-dependent RNA helicase 47, mitochondrial (551 aa).

The transit peptide at 1–29 (MAASTSTRFLVLLKDFSAFRKISWTCAAT) directs the protein to the mitochondrion. The short motif at 110 to 138 (KSFEELGLPDSLLDSLEREGFSVPTDVQS) is the Q motif element. In terms of domain architecture, Helicase ATP-binding spans 141–340 (VPAIIKGHDA…KSWSHEPVLV (200 aa)). 154–161 (SYTGSGKT) serves as a coordination point for ATP. The DEAD box signature appears at 274–277 (DEVD). Residues 397 to 548 (TLRRCVHALD…ELVVTEEDKA (152 aa)) enclose the Helicase C-terminal domain.

Belongs to the DEAD box helicase family. In terms of tissue distribution, mostly expressed in leaves and flowers, and, to a lower extent, in roots, seedlings and siliques, especially in meristematic regions.

Its subcellular location is the mitochondrion. It catalyses the reaction ATP + H2O = ADP + phosphate + H(+). In terms of biological role, essential protein required during embryogenesis. Required for mitochondrial metabolism. Necessary for normal plasmodesmata (PD) development and aperture regulation. The polypeptide is DEAD-box ATP-dependent RNA helicase 47, mitochondrial (RH47) (Arabidopsis thaliana (Mouse-ear cress)).